A 93-amino-acid chain; its full sequence is MGIKLINIGFGNIVSANRIVAIVSPESAPIKRVIQEARERGVLIDATYGRRTRAVIVTDSDHIILSAVQPETVAHRLNSKDNSKEIESVVDGE.

It belongs to the RemA family.

The sequence is that of Putative regulatory protein Clos_1422 from Alkaliphilus oremlandii (strain OhILAs) (Clostridium oremlandii (strain OhILAs)).